Consider the following 302-residue polypeptide: tRNA-cytidine(32) 2-sulfurtransferase (302 aa).

Residues 43–48 carry the PP-loop motif motif; that stretch reads SGGKDS. Residues cysteine 118, cysteine 121, and cysteine 209 each contribute to the [4Fe-4S] cluster site.

It belongs to the TtcA family. In terms of assembly, homodimer. The cofactor is Mg(2+). Requires [4Fe-4S] cluster as cofactor.

The protein localises to the cytoplasm. The catalysed reaction is cytidine(32) in tRNA + S-sulfanyl-L-cysteinyl-[cysteine desulfurase] + AH2 + ATP = 2-thiocytidine(32) in tRNA + L-cysteinyl-[cysteine desulfurase] + A + AMP + diphosphate + H(+). It functions in the pathway tRNA modification. In terms of biological role, catalyzes the ATP-dependent 2-thiolation of cytidine in position 32 of tRNA, to form 2-thiocytidine (s(2)C32). The sulfur atoms are provided by the cysteine/cysteine desulfurase (IscS) system. The chain is tRNA-cytidine(32) 2-sulfurtransferase from Polynucleobacter necessarius subsp. necessarius (strain STIR1).